The sequence spans 271 residues: Formamidopyrimidine-DNA glycosylase (271 aa).

Pro-2 (schiff-base intermediate with DNA) is an active-site residue. Residue Glu-3 is the Proton donor of the active site. Catalysis depends on Lys-58, which acts as the Proton donor; for beta-elimination activity. DNA-binding residues include His-92, Arg-111, and Arg-152. The FPG-type zinc finger occupies 237–271 (YVYGKVQKPCRICNNIITLIRQNGRSTYFCNACQN). The active-site Proton donor; for delta-elimination activity is Arg-261.

Belongs to the FPG family. As to quaternary structure, monomer. Requires Zn(2+) as cofactor.

It catalyses the reaction Hydrolysis of DNA containing ring-opened 7-methylguanine residues, releasing 2,6-diamino-4-hydroxy-5-(N-methyl)formamidopyrimidine.. It carries out the reaction 2'-deoxyribonucleotide-(2'-deoxyribose 5'-phosphate)-2'-deoxyribonucleotide-DNA = a 3'-end 2'-deoxyribonucleotide-(2,3-dehydro-2,3-deoxyribose 5'-phosphate)-DNA + a 5'-end 5'-phospho-2'-deoxyribonucleoside-DNA + H(+). Functionally, involved in base excision repair of DNA damaged by oxidation or by mutagenic agents. Acts as a DNA glycosylase that recognizes and removes damaged bases. Has a preference for oxidized purines, such as 7,8-dihydro-8-oxoguanine (8-oxoG). Has AP (apurinic/apyrimidinic) lyase activity and introduces nicks in the DNA strand. Cleaves the DNA backbone by beta-delta elimination to generate a single-strand break at the site of the removed base with both 3'- and 5'-phosphates. The chain is Formamidopyrimidine-DNA glycosylase from Wolbachia pipientis subsp. Culex pipiens (strain wPip).